Consider the following 476-residue polypeptide: tRNA (cytosine(72)-C(5))-methyltransferase NSUN6 (476 aa).

Positions 111–203 (QGEVIVGAQC…IGIRMTEPIY (93 aa)) constitute a PUA domain. S-adenosyl-L-methionine-binding positions include 242-248 (CAAPGGK), Asp266, Asp293, and Asp323. The active-site Nucleophile is the Cys373. Position 419 is an N6-acetyllysine (Lys419).

It belongs to the class I-like SAM-binding methyltransferase superfamily. RsmB/NOP family.

Its subcellular location is the cytoplasm. It catalyses the reaction cytidine(72) in tRNA(Thr) + S-adenosyl-L-methionine = 5-methylcytidine(72) in tRNA(Thr) + S-adenosyl-L-homocysteine + H(+). It carries out the reaction cytidine(72) in tRNA(Cys) + S-adenosyl-L-methionine = 5-methylcytidine(72) in tRNA(Cys) + S-adenosyl-L-homocysteine + H(+). In terms of biological role, S-adenosyl-L-methionine-dependent methyltransferase that specifically methylates the C5 position of cytosine 72 in tRNA(Thr)(TGT) and tRNA(Cys)(GCA). In vitro also methylates tRNA(Thr)(AGT). Methylation requires, in the acceptor stem region, the presence of the 3'-CCA terminus, the target site C72, the discriminator base U73, and the second and third base pairs (2:71 and 3:70) in the tRNA substrates. This is tRNA (cytosine(72)-C(5))-methyltransferase NSUN6 from Mus musculus (Mouse).